The primary structure comprises 79 residues: MSEIGERVKKIVVEHLGVEPEKVVETASFIDDLGADSLDTVELVMAFEEEFGCEIPDDAAETILTVGDATKFLEKNAKS.

One can recognise a Carrier domain in the interval 2–77 (SEIGERVKKI…DATKFLEKNA (76 aa)). Serine 37 carries the post-translational modification O-(pantetheine 4'-phosphoryl)serine.

It belongs to the acyl carrier protein (ACP) family. Post-translationally, 4'-phosphopantetheine is transferred from CoA to a specific serine of apo-ACP by AcpS. This modification is essential for activity because fatty acids are bound in thioester linkage to the sulfhydryl of the prosthetic group.

The protein localises to the cytoplasm. It functions in the pathway lipid metabolism; fatty acid biosynthesis. Its function is as follows. Carrier of the growing fatty acid chain in fatty acid biosynthesis. This Afipia carboxidovorans (strain ATCC 49405 / DSM 1227 / KCTC 32145 / OM5) (Oligotropha carboxidovorans) protein is Acyl carrier protein.